We begin with the raw amino-acid sequence, 919 residues long: Isoleucine--tRNA ligase (919 aa).

Residues 59-69 carry the 'HIGH' region motif; the sequence is PYANGHLHIGH. Glu570 is a binding site for L-isoleucyl-5'-AMP. The 'KMSKS' region signature appears at 611-615; the sequence is KMSKS. Lys614 serves as a coordination point for ATP. Residues Cys893, Cys896, Cys908, and Cys911 each coordinate Zn(2+).

This sequence belongs to the class-I aminoacyl-tRNA synthetase family. IleS type 1 subfamily. In terms of assembly, monomer. The cofactor is Zn(2+).

The protein resides in the cytoplasm. It carries out the reaction tRNA(Ile) + L-isoleucine + ATP = L-isoleucyl-tRNA(Ile) + AMP + diphosphate. Functionally, catalyzes the attachment of isoleucine to tRNA(Ile). As IleRS can inadvertently accommodate and process structurally similar amino acids such as valine, to avoid such errors it has two additional distinct tRNA(Ile)-dependent editing activities. One activity is designated as 'pretransfer' editing and involves the hydrolysis of activated Val-AMP. The other activity is designated 'posttransfer' editing and involves deacylation of mischarged Val-tRNA(Ile). The polypeptide is Isoleucine--tRNA ligase (Campylobacter curvus (strain 525.92)).